The following is a 330-amino-acid chain: Virulence plasmid integrase pGP8-D (330 aa).

The 86-residue stretch at F39–N124 folds into the Core-binding (CB) domain. A Tyr recombinase domain is found at V152–M327. Active-site residues include R189, K214, H279, R282, and H305. Catalysis depends on Y314, which acts as the O-(3'-phospho-DNA)-tyrosine intermediate.

The protein belongs to the 'phage' integrase family.

This chain is Virulence plasmid integrase pGP8-D, found in Chlamydia muridarum (strain MoPn / Nigg).